Reading from the N-terminus, the 199-residue chain is NADH-quinone oxidoreductase subunit C (199 aa).

Belongs to the complex I 30 kDa subunit family. In terms of assembly, NDH-1 is composed of 14 different subunits. Subunits NuoB, C, D, E, F, and G constitute the peripheral sector of the complex.

It localises to the cell inner membrane. The catalysed reaction is a quinone + NADH + 5 H(+)(in) = a quinol + NAD(+) + 4 H(+)(out). Its function is as follows. NDH-1 shuttles electrons from NADH, via FMN and iron-sulfur (Fe-S) centers, to quinones in the respiratory chain. The immediate electron acceptor for the enzyme in this species is believed to be ubiquinone. Couples the redox reaction to proton translocation (for every two electrons transferred, four hydrogen ions are translocated across the cytoplasmic membrane), and thus conserves the redox energy in a proton gradient. The sequence is that of NADH-quinone oxidoreductase subunit C from Cupriavidus taiwanensis (strain DSM 17343 / BCRC 17206 / CCUG 44338 / CIP 107171 / LMG 19424 / R1) (Ralstonia taiwanensis (strain LMG 19424)).